Consider the following 566-residue polypeptide: Ubiquitin carboxyl-terminal hydrolase 21 (566 aa).

Composition is skewed to basic and acidic residues over residues 1–14 (MPQA…RTRE) and 58–70 (PPDE…ELGR). Disordered regions lie at residues 1–103 (MPQA…LPLP) and 146–169 (PEPP…PPTL). 2 stretches are compositionally biased toward low complexity: residues 71-81 (GRTSGSRPRGP) and 151-160 (LRRSTSLRRL). The Nuclear export signal signature appears at 134-152 (ELGAALSRLALRPEPPTLR). The 348-residue stretch at 212-559 (VGLRNLGNTC…EGYVLFYQLM (348 aa)) folds into the USP domain. Residue Cys221 is the Nucleophile of the active site. Residues 324-349 (APPILASGPVPSPPRRGGGALHEEPE) are disordered. Residues Cys385, Cys388, Cys438, and Cys441 each contribute to the Zn(2+) site. His519 (proton acceptor) is an active-site residue.

Belongs to the peptidase C19 family. USP21 subfamily. Interacts with BEND3.

It localises to the cytoplasm. The protein localises to the nucleus. The catalysed reaction is Thiol-dependent hydrolysis of ester, thioester, amide, peptide and isopeptide bonds formed by the C-terminal Gly of ubiquitin (a 76-residue protein attached to proteins as an intracellular targeting signal).. Deubiquitinates histone H2A, a specific tag for epigenetic transcriptional repression, thereby acting as a coactivator. Deubiquitination of histone H2A releaves the repression of di- and trimethylation of histone H3 at 'Lys-4', resulting in regulation of transcriptional initiation. Regulates gene expression via histone H2A deubiquitination. Deubiquitinates BAZ2A/TIP5 leading to its stabilization. Also capable of removing NEDD8 from NEDD8 conjugates but has no effect on Sentrin-1 conjugates. Also acts as a negative regulator of the ribosome quality control (RQC) by mediating deubiquitination of 40S ribosomal proteins RPS10/eS10 and RPS20/uS10, thereby antagonizing ZNF598-mediated 40S ubiquitination. In Mus musculus (Mouse), this protein is Ubiquitin carboxyl-terminal hydrolase 21.